The following is a 1592-amino-acid chain: MAEPPPDDSAPVRLKTLENIYMDGPSKKPEALSFETLIDSLICLYDECCNSTLRKEKCIAEFVESVKTVISKAKKLRLSRDDFEVLKVIGKGAFGEVAVVRMRGVGEIYAMKILNKWEMVKRAETACFREERDVLVYGDRRWITNLHYAFQDEKNLYFVMDYYIGGDMLTLLSKFVDHIPESMAKFYIAEMVLAIDSLHRLGYVHRDVKPDNVLLDMQGHIRLADFGSCLRILADGSVASNVAVGTPDYISPEILRAMEDGRGRYGKECDWWSLGICMYEMLYGTTPFYSERLVDTYGKIMSHQDMLDFPDDEIDWVVSEEAKDLIRQLICSSDVRFGRNGLSDFQLHPFFEGIDWNTIRDSNPPYVPEVSSPEDTSNFDVDVCEDDFTPCLQETQPPRVLAAFTGNHLPFVGFSYTHGSLLSDARSLTDEIRAIAQRCQGDAELMEKSVDGFMVELENEKAELVQKLKEAQTIIAQHVAENPRSEEDRNYESTIAQLKDEIQILNKRLEDEALAQQQQKPKDEIVAESEKKLKELKERNKQLVMEKSEIQRELDNINDHLDQVLVEKATVVQQRDDMQAELADVGDSLLTEKDSVKRLQDEAEKAKKQVADFEEKLKEIETEKIALIKKQEEVTIEARKSVETDDHLSEEVVAAKNTIASLQATNEERETEIKKLKQRMDEERASHTAQSEQEMKQLEAHYERAQKMLQDNVEQMNVENRGLRDEIEKLSQQMAALPRGGLNEQQLHEIFNWVSEEKATREEMENLTRKITGEVESLKNNSPLTTSNYIQNTPSGWGSRRMNNVARKDGLDLQRQLQAEIDAKLKLKAELKNSQEQYLTSAARLDDTEKRMASLMREVAMLKQQKNIENSSDSAFSSTMGRGDLMISMNNDYEMSNSSLMRQEMISRQSTPSYENAILLHDHQVPKRVDDLRYKQKPMKTASGIFSPVSISAMERGHNFERMKIKTPTKCGHCTSILIGLDRQGLFCQSCQYACHVSCAERVSQSCPVPEEERRPLGIDPTRGVGTAYEGLVKTPRAGGVRKGWQTAYVVVCDFKLYLYDCTVDRQNKMQDVKNEIRLVLDMRDPDFTVCGVSEADVIHAQKGDIPKIFRVTTTQILNSSSEYSSSSKFYTLFMAETEEEKRKWVVALSELKTLLRRSKLADRKAFLVKEVFDVTTLPSIRVAQCCAIIDRSKIVIGFSDHGLYCIEISRQLLIPVGGEKENKQRCVETVEYDEAEQLLMMIVGPAKDRHVRIVPSAALDGRDLKWIKVNDTKGCHLLAVGTNNPGGRAGFFAVAFKKSVTIFQIDRSEKRHKKWKDLAMPGTPQSIAIFNGRLYVGFSHSFRSWSLVGVDSSPVGSGDASGAVLQHISLVNMEDTSLQFLNQQTSYEAKLIVNVPGSPDEYLLVFNMIGLYVNEMGRRSRLPEVMFPTQAKYFAYHEPYLCVFSENEVDIFNVTLAEWVQTINLRSAKPLSGDGILSTCLCNDSPIFVLLQNVLQDQDSIEVPVNLASGSTDGRKVTRRKFTFRTIGKDDRSASERRSHIQISTPSDFMHIVHMGPAPVMELQQNFIDLQSNHSHTSSDKDSLNRSVNND.

Residues 1-954 (MAEPPPDDSA…IFSPVSISAM (954 aa)) are involved in homo-dimerization. Residues 83–351 (FEVLKVIGKG…LSDFQLHPFF (269 aa)) form the Protein kinase domain. Residues 89-97 (IGKGAFGEV) and lysine 112 contribute to the ATP site. The active-site Proton acceptor is the aspartate 207. An AGC-kinase C-terminal domain is found at 352 to 426 (EGIDWNTIRD…THGSLLSDAR (75 aa)). A Phosphoserine modification is found at serine 415. The residue at position 416 (tyrosine 416) is a Phosphotyrosine. 2 coiled-coil regions span residues 444 to 782 (ELME…KNNS) and 811 to 871 (LDLQ…IENS). The segment covering 782 to 796 (SPLTTSNYIQNTPSG) has biased composition (polar residues). The interval 782–801 (SPLTTSNYIQNTPSGWGSRR) is disordered. The segment at 955-1534 (ERGHNFERMK…FRTIGKDDRS (580 aa)) is involved in binding to membranes, with a preference for di-phosphorylated phosphoinositides (PIPs). The Phorbol-ester/DAG-type zinc finger occupies 957-1007 (GHNFERMKIKTPTKCGHCTSILIGLDRQGLFCQSCQYACHVSCAERVSQSC). The Zn(2+) site is built by histidine 958, cysteine 971, cysteine 974, cysteine 988, cysteine 991, histidine 996, cysteine 999, and cysteine 1007. The PH domain maps to 1026–1154 (GTAYEGLVKT…WVVALSELKT (129 aa)). The region spanning 1181–1479 (IRVAQCCAII…KPLSGDGILS (299 aa)) is the CNH domain. Residues 1544-1557 (ISTPSDFMHIVHMG) form the CRIB domain. The tract at residues 1544–1557 (ISTPSDFMHIVHMG) is involved in interaction with cdc-42 (GTP-bound). Deletion prevents rescue of a null mutant; furthermore deleted form of mrck-1 is no longer recruited to the cell cortex and instead appears to be completely cytoplasmic.

The protein belongs to the protein kinase superfamily. AGC Ser/Thr protein kinase family. DMPK subfamily. In terms of assembly, homodimer, via N-terminal domains. Interacts (via the CRIB domain) with cdc-42 (GTP-bound), but with a lower affinity for cdc-42 bound to GDP; the interaction is direct and may play a role in the recruitment of mrck-1 to the apical membrane. Mg(2+) serves as cofactor. As to expression, expressed in embryonic and L4 larval seam cells and in embryonic dorsal and ventral epidermal cells. Also expressed in the pharynx throughout development and in sublateral nerve cords in the L4 larva.

It is found in the cytoplasm. The protein localises to the cell cortex. The enzyme catalyses L-seryl-[protein] + ATP = O-phospho-L-seryl-[protein] + ADP + H(+). The catalysed reaction is L-threonyl-[protein] + ATP = O-phospho-L-threonyl-[protein] + ADP + H(+). Serine/threonine-protein kinase. Involved in regulating endoderm precursor cell movements during early gastrulation; activates apical myosin and thereby increases actomyosin contractility and tension in the apical cell cortex, probably as a result of recruitment of mrck-1 to the cortex by a combination of interaction with active cdc-42 and membrane binding. May phosphorylate and inactivate the phosphatase mel-11, and thereby contribute to the regulation of myosin II contractility during embryonic elongation. Involved in controlling canal length and Golgi/ER integrity during excretory canal elongation. This is Serine/threonine-protein kinase mrck-1 from Caenorhabditis elegans.